Consider the following 231-residue polypeptide: Orotidine 5'-phosphate decarboxylase (231 aa).

Residues Asp-11, Lys-33, 60-69, Thr-120, Arg-181, Gln-190, Gly-210, and Arg-211 each bind substrate; that span reads DLKFHDIPNT. Lys-62 acts as the Proton donor in catalysis.

This sequence belongs to the OMP decarboxylase family. Type 1 subfamily. As to quaternary structure, homodimer.

It catalyses the reaction orotidine 5'-phosphate + H(+) = UMP + CO2. It participates in pyrimidine metabolism; UMP biosynthesis via de novo pathway; UMP from orotate: step 2/2. Its function is as follows. Catalyzes the decarboxylation of orotidine 5'-monophosphate (OMP) to uridine 5'-monophosphate (UMP). This Shewanella oneidensis (strain ATCC 700550 / JCM 31522 / CIP 106686 / LMG 19005 / NCIMB 14063 / MR-1) protein is Orotidine 5'-phosphate decarboxylase.